Consider the following 434-residue polypeptide: Arginine/serine-rich coiled-coil protein 2 (434 aa).

A compositionally biased stretch (basic and acidic residues) spans 1–27 (MAASDTERDGLAPEKTSPDRDKKKEQS). A disordered region spans residues 1–230 (MAASDTERDG…PSPPPFRGRN (230 aa)). Ala2 carries the N-acetylalanine modification. Position 4 is a phosphoserine (Ser4). Phosphothreonine is present on residues Thr6 and Thr16. Residues Ser17, Ser30, and Ser32 each carry the phosphoserine modification. Positions 35–51 (ASKHHYSRSRSRSRERK) are enriched in basic residues. Basic and acidic residues predominate over residues 66 to 111 (RSKEGRRHESKDKSSKKHKSEEHNDKEHSSDKGRERLNSSENGEDR). The residue at position 104 (Ser104) is a Phosphoserine. Positions 112-214 (HKRKERKSSR…KRIEKPRRFS (103 aa)) are enriched in basic residues. Positions 230–270 (NTAMDAQEALARRLERAKKLQEQREKEMVEKQKQQEIAAAA) form a coiled coil. Lys375 is covalently cross-linked (Glycyl lysine isopeptide (Lys-Gly) (interchain with G-Cter in SUMO1); alternate). Residue Lys375 forms a Glycyl lysine isopeptide (Lys-Gly) (interchain with G-Cter in SUMO2); alternate linkage. Ser376 bears the Phosphoserine mark.

It belongs to the RSRC2 family.

This is Arginine/serine-rich coiled-coil protein 2 (RSRC2) from Homo sapiens (Human).